The primary structure comprises 254 residues: MATIKEIQQRLELVTDLADPFLAEAANDQRSGVQKAIEKRKRAIQAELDEDLRLEQMLRYEKELYKADYQAIAGIDEVGRGPLAGPVVAAAVILPPECKIKGLNDSKKIPKKKHQEIYQAVLDKALAVGVGLMNNEIIDQVNIYEATKLAMKEALSKLSLKPDYLLIDAMKLDVDIPQESIIKGDANSLSIAAASIVAKVTRDKLMADYDKKFPGYDFAKNAGYGTRSHLQGLERSGVTPIHRKTFEPIKSMYE.

The RNase H type-2 domain occupies 70 to 254 (QAIAGIDEVG…TFEPIKSMYE (185 aa)). The a divalent metal cation site is built by aspartate 76, glutamate 77, and aspartate 168.

It belongs to the RNase HII family. The cofactor is Mn(2+). Mg(2+) is required as a cofactor.

It is found in the cytoplasm. It carries out the reaction Endonucleolytic cleavage to 5'-phosphomonoester.. In terms of biological role, endonuclease that specifically degrades the RNA of RNA-DNA hybrids. The sequence is that of Ribonuclease HII from Streptococcus sanguinis (strain SK36).